The chain runs to 221 residues: DELTA-actitoxin-Ucs1a (221 aa).

An N-terminal signal peptide occupies residues 1 to 19; sequence MNRLIVLCLFVAMIYATIA. A propeptide spanning residues 20–42 is cleaved from the precursor; the sequence is LPKKEDISNDERSISVSKVPVKK. The tract at residues 45–54 is plays an important role in the hemolytic activity; that stretch reads AIAGAVIEGA. Residues 53 to 72 form an N-terminal region region; that stretch reads GAKLTFGILEKILTVLGDIN. Phosphocholine contacts are provided by Ser96, Val129, Ser147, Pro149, Tyr175, Tyr179, and Tyr180. The interval 147–162 is trp-rich region, which is important for the binding to lipid membrane; the sequence is SVPYDYNLYSNWWNIK. Residues 186–188 carry the Cell attachment site, crucial for protein stability motif; sequence KGD.

Belongs to the actinoporin family. Sea anemone subfamily. As to quaternary structure, octamer or nonamer in membranes. Monomer in the soluble state.

Its subcellular location is the secreted. The protein localises to the nematocyst. It is found in the target cell membrane. Functionally, pore-forming protein that forms cations-selective hydrophilic pores of around 1 nm and causes cytolysis. Pore formation is a multi-step process that involves specific recognition of membrane sphingomyelin (but neither cholesterol nor phosphatidylcholine) using aromatic rich region and adjacent phosphocholine (POC) binding site, firm binding to the membrane (mainly driven by hydrophobic interactions) accompanied by the transfer of the N-terminal region to the lipid-water interface and finally pore formation after oligomerization of monomers. This Urticina crassicornis (Mottled anemone) protein is DELTA-actitoxin-Ucs1a.